A 683-amino-acid chain; its full sequence is Dipeptidyl-peptidase 5 (683 aa).

Positions M1 to A19 are cleaved as a signal peptide. 6 N-linked (GlcNAc...) asparagine glycosylation sites follow: N53, N69, N103, N116, N126, and N400. Residues S535, D617, and H649 each act as charge relay system in the active site.

The protein belongs to the peptidase S9C family.

It localises to the secreted. Its subcellular location is the cytoplasm. The protein localises to the nucleus. The protein is Dipeptidyl-peptidase 5 of Schizosaccharomyces pombe (strain 972 / ATCC 24843) (Fission yeast).